A 144-amino-acid chain; its full sequence is Protein cornichon homolog 1 (144 aa).

Residues 1 to 10 (MAFTFAAFCY) lie on the Cytoplasmic side of the membrane. A helical membrane pass occupies residues 11–31 (MLALLLTAALIFFAIWHIIAF). Topologically, residues 32–56 (DELKTDYKNPIDQCNTLNPLVLPEY) are lumenal. Residues 57-77 (LIHAFFCVMFLCAAEWLTLGL) traverse the membrane as a helical segment. The Cytoplasmic portion of the chain corresponds to 78–122 (NMPLLAYHIWRYMSRPVMSGPGLYDPTTIMNADILAYCQKEGWCK). A helical membrane pass occupies residues 123 to 143 (LAFYLLAFFYYLYGMIYVLVS). Position 144 (serine 144) is a topological domain, lumenal.

Belongs to the cornichon family. As to quaternary structure, interacts with AREG immature precursor and with immature TGFA, i.e. with a prosegment and lacking full N-glycosylation, but not with the fully N-glycosylated form. In the Golgi apparatus, may form a complex with GORASP55 and transmembrane TGFA.

Its subcellular location is the endoplasmic reticulum membrane. It localises to the golgi apparatus membrane. Functionally, involved in the selective transport and maturation of TGF-alpha family proteins. The protein is Protein cornichon homolog 1 (CNIH1) of Bos taurus (Bovine).